A 283-amino-acid chain; its full sequence is Putative 4-diphosphocytidyl-2-C-methyl-D-erythritol kinase (283 aa).

Lys-10 is a catalytic residue. 94–104 (PVCAGLGGGST) is a binding site for ATP. The active site involves Asp-136.

The protein belongs to the GHMP kinase family. IspE subfamily.

The enzyme catalyses 4-CDP-2-C-methyl-D-erythritol + ATP = 4-CDP-2-C-methyl-D-erythritol 2-phosphate + ADP + H(+). Functionally, catalyzes the phosphorylation of the position 2 hydroxy group of 4-diphosphocytidyl-2C-methyl-D-erythritol. The protein is Putative 4-diphosphocytidyl-2-C-methyl-D-erythritol kinase (ispE) of Streptococcus agalactiae serotype Ia (strain ATCC 27591 / A909 / CDC SS700).